A 535-amino-acid polypeptide reads, in one-letter code: Methylmalonate-semialdehyde/malonate-semialdehyde dehydrogenase [acylating], mitochondrial (535 aa).

The N-terminal 32 residues, 1-32 (MAAAVAAAAAMRSRILQVSSKVNATWYPASSF), are a transit peptide targeting the mitochondrion. N6-acetyllysine; alternate occurs at positions 47, 52, 55, and 76. Residues K47, K52, K55, and K76 each carry the N6-succinyllysine; alternate modification. Residue K87 is modified to N6-acetyllysine. K117 and K129 each carry N6-acetyllysine; alternate. An N6-succinyllysine; alternate mark is found at K117 and K129. Residues A183, F185, K209, E212, R213, and S262 each contribute to the NAD(+) site. A Phosphoserine modification is found at S262. K298 carries the post-translational modification N6-acetyllysine. C317 (nucleophile) is an active-site residue. N6-acetyllysine is present on residues K330 and K331. 2 positions are modified to N6-acetyllysine; alternate: K364 and K376. N6-succinyllysine; alternate is present on residues K364 and K376. Position 380 is a phosphoserine (S380). At K391 the chain carries N6-succinyllysine. E417 provides a ligand contact to NAD(+). An N6-acetyllysine modification is found at K500. K517 carries the post-translational modification N6-succinyllysine.

Belongs to the aldehyde dehydrogenase family. As to quaternary structure, homotetramer. In terms of processing, acetylation of Lys-55; Lys-117 and Lys-331 is observed in liver mitochondria from fasted mice but not from fed mice.

Its subcellular location is the mitochondrion. The catalysed reaction is 3-oxopropanoate + NAD(+) + CoA + H2O = hydrogencarbonate + acetyl-CoA + NADH + H(+). It catalyses the reaction 2-methyl-3-oxopropanoate + NAD(+) + CoA + H2O = propanoyl-CoA + hydrogencarbonate + NADH + H(+). It carries out the reaction (R)-2-methyl-3-oxopropanoate + NAD(+) + CoA + H2O = propanoyl-CoA + hydrogencarbonate + NADH + H(+). The enzyme catalyses (S)-2-methyl-3-oxopropanoate + NAD(+) + CoA + H2O = propanoyl-CoA + hydrogencarbonate + NADH + H(+). In terms of biological role, malonate and methylmalonate semialdehyde dehydrogenase involved in the catabolism of valine, thymine, and compounds catabolized by way of beta-alanine, including uracil and cytidine. The protein is Methylmalonate-semialdehyde/malonate-semialdehyde dehydrogenase [acylating], mitochondrial of Mus musculus (Mouse).